Consider the following 312-residue polypeptide: Olfactory receptor 10D3 (312 aa).

At 1 to 26 (MEVKNCCMVTEFILLGIPHTEGLEMT) the chain is on the extracellular side. A helical transmembrane segment spans residues 27-47 (LFVLFLPFYACTLLGNVSILV). The Cytoplasmic portion of the chain corresponds to 48–57 (AVMSSARLHT). A helical transmembrane segment spans residues 58–78 (PMYFFLGNLSVFDMGFSSVTC). Topologically, residues 79-97 (PKMLLYLMGLSRLISYKDC) are extracellular. Cysteine 97 and cysteine 179 are oxidised to a cystine. The chain crosses the membrane as a helical span at residues 98–118 (VCQLFFFHFLGSIECFLFTVM). Residues 119–139 (AYDRFTAICYPLRYTVIMNPR) lie on the Cytoplasmic side of the membrane. The helical transmembrane segment at 140–160 (ICVALAVGTWLLGCIHSSILT) threads the bilayer. At 161-197 (SLTFTLPYCGPNEVDHFFCDIPALLPLACADTSLAQR) the chain is on the extracellular side. The helical transmembrane segment at 198–218 (VSFTNVGLISLVCFLLILLSY) threads the bilayer. The Cytoplasmic segment spans residues 219-239 (TRITISILSIRTTEGRRRAFS). Residues 240–260 (TCSAHLIAILCAYGPIITVYL) form a helical membrane-spanning segment. Topologically, residues 261-266 (QPTPNP) are extracellular. The helical transmembrane segment at 267–287 (MLGTVVQILMNLVGPMLNPLI) threads the bilayer. The Cytoplasmic segment spans residues 288 to 312 (YTLRNKEVKTALKTILHRTGHVPES).

This sequence belongs to the G-protein coupled receptor 1 family.

It localises to the cell membrane. Odorant receptor. The polypeptide is Olfactory receptor 10D3 (Homo sapiens (Human)).